We begin with the raw amino-acid sequence, 85 residues long: Large ribosomal subunit protein bL27 (85 aa).

The tract at residues 1-20 (MATKKAGGSTRNGRDSEAKR) is disordered.

This sequence belongs to the bacterial ribosomal protein bL27 family.

The sequence is that of Large ribosomal subunit protein bL27 from Actinobacillus pleuropneumoniae serotype 5b (strain L20).